The sequence spans 199 residues: Molybdenum cofactor guanylyltransferase (199 aa).

GTP contacts are provided by residues 12-14 (LAG), lysine 25, asparagine 53, aspartate 71, and aspartate 101. Aspartate 101 lines the Mg(2+) pocket.

It belongs to the MobA family. In terms of assembly, monomer. Requires Mg(2+) as cofactor.

The protein localises to the cytoplasm. It carries out the reaction Mo-molybdopterin + GTP + H(+) = Mo-molybdopterin guanine dinucleotide + diphosphate. In terms of biological role, transfers a GMP moiety from GTP to Mo-molybdopterin (Mo-MPT) cofactor (Moco or molybdenum cofactor) to form Mo-molybdopterin guanine dinucleotide (Mo-MGD) cofactor. In Polynucleobacter asymbioticus (strain DSM 18221 / CIP 109841 / QLW-P1DMWA-1) (Polynucleobacter necessarius subsp. asymbioticus), this protein is Molybdenum cofactor guanylyltransferase.